Reading from the N-terminus, the 460-residue chain is Proline--tRNA ligase (460 aa).

This sequence belongs to the class-II aminoacyl-tRNA synthetase family. ProS type 3 subfamily. Homodimer.

It localises to the cytoplasm. It catalyses the reaction tRNA(Pro) + L-proline + ATP = L-prolyl-tRNA(Pro) + AMP + diphosphate. In terms of biological role, catalyzes the attachment of proline to tRNA(Pro) in a two-step reaction: proline is first activated by ATP to form Pro-AMP and then transferred to the acceptor end of tRNA(Pro). The protein is Proline--tRNA ligase of Methanococcus maripaludis (strain DSM 14266 / JCM 13030 / NBRC 101832 / S2 / LL).